The primary structure comprises 301 residues: 4-hydroxybenzoate octaprenyltransferase (301 aa).

8 consecutive transmembrane segments (helical) span residues 34-54 (IGSLLLLWPTWWALWLAADGL), 57-77 (LWTLLVFTAGVWLTRSAGCVI), 108-128 (LWVFVVLMLVAFALVLTLNWL), 152-172 (LPQVYLGMAFGWGIPMAFAAV), 176-196 (VPLLGWLLYAANILWATAYDT), 221-241 (FDLIAQGILYALMAATLVLVG), 245-265 (DLGVAYWAGLAVAALLVAYEF), and 279-299 (AFLHNNWVGLAIFVGIAVAVA).

The protein belongs to the UbiA prenyltransferase family. The cofactor is Mg(2+).

It is found in the cell inner membrane. It carries out the reaction all-trans-octaprenyl diphosphate + 4-hydroxybenzoate = 4-hydroxy-3-(all-trans-octaprenyl)benzoate + diphosphate. The protein operates within cofactor biosynthesis; ubiquinone biosynthesis. Catalyzes the prenylation of para-hydroxybenzoate (PHB) with an all-trans polyprenyl group. Mediates the second step in the final reaction sequence of ubiquinone-8 (UQ-8) biosynthesis, which is the condensation of the polyisoprenoid side chain with PHB, generating the first membrane-bound Q intermediate 3-octaprenyl-4-hydroxybenzoate. This is 4-hydroxybenzoate octaprenyltransferase from Xanthomonas euvesicatoria pv. vesicatoria (strain 85-10) (Xanthomonas campestris pv. vesicatoria).